Consider the following 213-residue polypeptide: Thiopurine S-methyltransferase (213 aa).

Trp-10, Leu-45, Glu-66, and Arg-121 together coordinate S-adenosyl-L-methionine.

The protein belongs to the class I-like SAM-binding methyltransferase superfamily. TPMT family.

Its subcellular location is the cytoplasm. It catalyses the reaction S-adenosyl-L-methionine + a thiopurine = S-adenosyl-L-homocysteine + a thiopurine S-methylether.. The chain is Thiopurine S-methyltransferase from Aliivibrio fischeri (strain ATCC 700601 / ES114) (Vibrio fischeri).